The primary structure comprises 185 residues: Ribosome-recycling factor (185 aa).

The protein belongs to the RRF family.

The protein resides in the cytoplasm. Functionally, responsible for the release of ribosomes from messenger RNA at the termination of protein biosynthesis. May increase the efficiency of translation by recycling ribosomes from one round of translation to another. The chain is Ribosome-recycling factor from Streptococcus pneumoniae (strain P1031).